A 136-amino-acid chain; its full sequence is uncharacterized protein (136 aa).

2 disordered regions span residues 23 to 44 (QESL…KEDN) and 56 to 95 (DGVI…ESAR). Residues 61–79 (SEEGCSSSGEKENSGLCSE) are compositionally biased toward low complexity. The span at 80 to 91 (ESSEEDPEEAEE) shows a compositional bias: acidic residues.

This is an uncharacterized protein from Saccharomyces cerevisiae (strain ATCC 204508 / S288c) (Baker's yeast).